The chain runs to 476 residues: Aspartyl/glutamyl-tRNA(Asn/Gln) amidotransferase subunit B (476 aa).

The protein belongs to the GatB/GatE family. GatB subfamily. Heterotrimer of A, B and C subunits.

It carries out the reaction L-glutamyl-tRNA(Gln) + L-glutamine + ATP + H2O = L-glutaminyl-tRNA(Gln) + L-glutamate + ADP + phosphate + H(+). The catalysed reaction is L-aspartyl-tRNA(Asn) + L-glutamine + ATP + H2O = L-asparaginyl-tRNA(Asn) + L-glutamate + ADP + phosphate + 2 H(+). Its function is as follows. Allows the formation of correctly charged Asn-tRNA(Asn) or Gln-tRNA(Gln) through the transamidation of misacylated Asp-tRNA(Asn) or Glu-tRNA(Gln) in organisms which lack either or both of asparaginyl-tRNA or glutaminyl-tRNA synthetases. The reaction takes place in the presence of glutamine and ATP through an activated phospho-Asp-tRNA(Asn) or phospho-Glu-tRNA(Gln). This Lacticaseibacillus paracasei (strain ATCC 334 / BCRC 17002 / CCUG 31169 / CIP 107868 / KCTC 3260 / NRRL B-441) (Lactobacillus paracasei) protein is Aspartyl/glutamyl-tRNA(Asn/Gln) amidotransferase subunit B.